Consider the following 167-residue polypeptide: LIM domain transcription factor LMO4.1 (167 aa).

Positions 1-17 (MVNNRVTESTTTAVSSN) are enriched in polar residues. Residues 1-20 (MVNNRVTESTTTAVSSNGGP) are disordered. LIM zinc-binding domains lie at 22–84 (KACA…LFGS) and 86–148 (GACS…GLLS).

Its function is as follows. Acts as a positive cofactor of GATA transcription factors to establish the identity of the ventral mesoderm during gastrulation. Down-regulation in the dorsal mesoderm is necessary for the proper formation of this territory since, when present, lmo4 may bind ldb1 and restrict the availability of this cofactor for Spemman organizer transcription factors. At neurula stages, suppresses primary neuron differentiation and modulates gene expression at the Isthmic Organizer of the midbrain-hindbrain boundary. This Xenopus tropicalis (Western clawed frog) protein is LIM domain transcription factor LMO4.1 (lmo4.1).